The following is a 289-amino-acid chain: ATP synthase gamma chain (289 aa).

It belongs to the ATPase gamma chain family. In terms of assembly, F-type ATPases have 2 components, CF(1) - the catalytic core - and CF(0) - the membrane proton channel. CF(1) has five subunits: alpha(3), beta(3), gamma(1), delta(1), epsilon(1). CF(0) has three main subunits: a, b and c.

It is found in the cell inner membrane. In terms of biological role, produces ATP from ADP in the presence of a proton gradient across the membrane. The gamma chain is believed to be important in regulating ATPase activity and the flow of protons through the CF(0) complex. The chain is ATP synthase gamma chain from Haemophilus influenzae (strain PittEE).